The chain runs to 197 residues: Phospholipid hydroperoxide glutathione peroxidase (197 aa).

A Phosphoserine modification is found at Ser-40. Sec-73 is a catalytic residue. A non-standard amino acid (selenocysteine) is located at residue Sec-73.

Belongs to the glutathione peroxidase family. As to quaternary structure, monomer. Has a tendency to form higher mass oligomers. Interacts with FUNDC1; this interaction promotes GPX4 recruitment into mitochondria through TOM/TIM complex where it is degraded by mitophagy.

It localises to the mitochondrion. Its subcellular location is the cytoplasm. It catalyses the reaction a hydroperoxy polyunsaturated fatty acid + 2 glutathione = a hydroxy polyunsaturated fatty acid + glutathione disulfide + H2O. It carries out the reaction (12S)-hydroperoxy-(5Z,8Z,10E,14Z)-eicosatetraenoate + 2 glutathione = (12S)-hydroxy-(5Z,8Z,10E,14Z)-eicosatetraenoate + glutathione disulfide + H2O. The catalysed reaction is (13S)-hydroperoxy-(9Z,11E)-octadecadienoate + 2 glutathione = (13S)-hydroxy-(9Z,11E)-octadecadienoate + glutathione disulfide + H2O. In terms of biological role, essential antioxidant peroxidase that directly reduces phospholipid hydroperoxide even if they are incorporated in membranes and lipoproteins. Can also reduce fatty acid hydroperoxide, cholesterol hydroperoxide and thymine hydroperoxide. Plays a key role in protecting cells from oxidative damage by preventing membrane lipid peroxidation. Required to prevent cells from ferroptosis, a non-apoptotic cell death resulting from an iron-dependent accumulation of lipid reactive oxygen species. The presence of selenocysteine (Sec) versus Cys at the active site is essential for life: it provides resistance to overoxidation and prevents cells against ferroptosis. The presence of Sec at the active site is also essential for the survival of a specific type of parvalbumin-positive interneurons, thereby preventing against fatal epileptic seizures. May be required to protect cells from the toxicity of ingested lipid hydroperoxides. Required for normal sperm development and male fertility. Essential for maturation and survival of photoreceptor cells. Plays a role in a primary T-cell response to viral and parasitic infection by protecting T-cells from ferroptosis and by supporting T-cell expansion. Plays a role of glutathione peroxidase in platelets in the arachidonic acid metabolism. Reduces hydroperoxy ester lipids formed by a 15-lipoxygenase that may play a role as down-regulator of the cellular 15-lipoxygenase pathway. The sequence is that of Phospholipid hydroperoxide glutathione peroxidase from Sapajus apella (Brown-capped capuchin).